The sequence spans 346 residues: Methylthioribose-1-phosphate isomerase (346 aa).

Substrate-binding positions include 45 to 47 (RGA), Arg87, and Gln194. The Proton donor role is filled by Asp235. Residue 245 to 246 (NK) coordinates substrate.

Belongs to the eIF-2B alpha/beta/delta subunits family. MtnA subfamily.

The enzyme catalyses 5-(methylsulfanyl)-alpha-D-ribose 1-phosphate = 5-(methylsulfanyl)-D-ribulose 1-phosphate. It functions in the pathway amino-acid biosynthesis; L-methionine biosynthesis via salvage pathway; L-methionine from S-methyl-5-thio-alpha-D-ribose 1-phosphate: step 1/6. In terms of biological role, catalyzes the interconversion of methylthioribose-1-phosphate (MTR-1-P) into methylthioribulose-1-phosphate (MTRu-1-P). In Syntrophomonas wolfei subsp. wolfei (strain DSM 2245B / Goettingen), this protein is Methylthioribose-1-phosphate isomerase.